The sequence spans 357 residues: 3-dehydroquinate synthase (357 aa).

Residues 99–103 (GATGD), 123–124 (TT), Lys-135, Lys-144, and 162–165 (FLET) each bind NAD(+). Glu-177, His-247, and His-261 together coordinate Zn(2+).

It belongs to the sugar phosphate cyclases superfamily. Dehydroquinate synthase family. Co(2+) serves as cofactor. Requires Zn(2+) as cofactor. The cofactor is NAD(+).

It localises to the cytoplasm. It catalyses the reaction 7-phospho-2-dehydro-3-deoxy-D-arabino-heptonate = 3-dehydroquinate + phosphate. The protein operates within metabolic intermediate biosynthesis; chorismate biosynthesis; chorismate from D-erythrose 4-phosphate and phosphoenolpyruvate: step 2/7. Its function is as follows. Catalyzes the conversion of 3-deoxy-D-arabino-heptulosonate 7-phosphate (DAHP) to dehydroquinate (DHQ). The protein is 3-dehydroquinate synthase of Macrococcus caseolyticus (strain JCSC5402) (Macrococcoides caseolyticum).